The chain runs to 274 residues: Large ribosomal subunit protein uL2 (274 aa).

The tract at residues 222–274 is disordered; sequence GVAMNPVDHPHGGGEGRGKGHHPQSPWGQLAKGYKTRRGKKASDKLIVRRRNG. The span at 229-239 shows a compositional bias: basic and acidic residues; it reads DHPHGGGEGRG.

This sequence belongs to the universal ribosomal protein uL2 family. In terms of assembly, part of the 50S ribosomal subunit. Forms a bridge to the 30S subunit in the 70S ribosome.

In terms of biological role, one of the primary rRNA binding proteins. Required for association of the 30S and 50S subunits to form the 70S ribosome, for tRNA binding and peptide bond formation. It has been suggested to have peptidyltransferase activity; this is somewhat controversial. Makes several contacts with the 16S rRNA in the 70S ribosome. The sequence is that of Large ribosomal subunit protein uL2 from Thermosipho melanesiensis (strain DSM 12029 / CIP 104789 / BI429).